The following is a 1579-amino-acid chain: MAP kinase kinase kinase SSK2 (1579 aa).

The disordered stretch occupies residues 1–70; sequence MSHSDYFNYK…HSTQYFRSPN (70 aa). The segment covering 21–44 has biased composition (low complexity); that stretch reads SSKMRQSSSSSSSRLRSESLGRNS. Residues 45-67 show a composition bias toward polar residues; sequence NTTQARVASSPISPGLHSTQYFR. Phosphoserine is present on residues Ser57, Ser62, Ser78, and Ser118. Disordered regions lie at residues 97–155 and 190–243; these read FFHQ…ESEI and SIMS…GSTT. Over residues 104–118 the composition is skewed to low complexity; that stretch reads SGSSSSSARSSRRPS. The span at 127-139 shows a compositional bias: polar residues; sequence NPQQSLPKLSTQP. The span at 144-155 shows a compositional bias: basic and acidic residues; it reads KKVEASKTESEI. The residue at position 290 (Ser290) is a Phosphoserine. One can recognise a Protein kinase domain in the interval 1266 to 1558; it reads WQKRNFIGGG…AVELLMDPWI (293 aa). Residues 1272–1280 and Lys1295 each bind ATP; that span reads IGGGTFGRV. Residue Asp1390 is the Proton acceptor of the active site. A Phosphoserine modification is found at Ser1424.

It belongs to the protein kinase superfamily. STE Ser/Thr protein kinase family. MAP kinase kinase kinase subfamily. In terms of assembly, interacts with by SSK1.

The enzyme catalyses L-seryl-[protein] + ATP = O-phospho-L-seryl-[protein] + ADP + H(+). The catalysed reaction is L-threonyl-[protein] + ATP = O-phospho-L-threonyl-[protein] + ADP + H(+). In terms of biological role, kinase involved in a signal transduction pathway that is activated by changes in the osmolarity of the extracellular environment. Activates the PBS2 MAP kinase kinase by phosphorylation. This chain is MAP kinase kinase kinase SSK2 (SSK2), found in Saccharomyces cerevisiae (strain ATCC 204508 / S288c) (Baker's yeast).